We begin with the raw amino-acid sequence, 540 residues long: Zona pellucida sperm-binding protein 4 (540 aa).

The signal sequence occupies residues 1 to 18 (MWLLRCVLLCVSLSLAVS). Residues 19 to 505 (GQHKPEAPDY…EKLRVPVDSK (487 aa)) are Extracellular-facing. The N-linked (GlcNAc...) asparagine glycan is linked to Asn69. Residues 141–183 (DWCDSIPARDRLPCAPSPISRGDCEGLGCCYSSEEVNSCYYGN) form the P-type domain. One can recognise a ZP domain in the interval 188-466 (HCTREGHFSI…VTCPDLSRRR (279 aa)). N-linked (GlcNAc...) asparagine glycosylation is found at Asn202, Asn219, and Asn267. Thr302 carries an O-linked (GalNAc...) threonine glycan. Residues Cys367 and Cys442 are joined by a disulfide bond. A propeptide spans 463–540 (SRRRNFDNSS…QKSCPDQMCQ (78 aa)) (removed in mature form). Residues Asn470 and Asn474 are each glycosylated (N-linked (GlcNAc...) asparagine). The helical transmembrane segment at 506-526 (VLWVAGLSGTLILGALLVSYL) threads the bilayer. Topologically, residues 527-540 (AVKKQKSCPDQMCQ) are cytoplasmic.

It belongs to the ZP domain family. ZPB subfamily. In terms of processing, proteolytically cleaved before the transmembrane segment to yield the secreted ectodomain incorporated in the zona pellucida. As to expression, expressed in oocytes.

The protein resides in the zona pellucida. It localises to the cell membrane. Its function is as follows. Component of the zona pellucida, an extracellular matrix surrounding oocytes which mediates sperm binding, induction of the acrosome reaction and prevents post-fertilization polyspermy. The zona pellucida is composed of 3 to 4 glycoproteins, ZP1, ZP2, ZP3, and ZP4. ZP4 may act as a sperm receptor. This Homo sapiens (Human) protein is Zona pellucida sperm-binding protein 4 (ZP4).